The following is a 422-amino-acid chain: Gamma-glutamyl phosphate reductase (422 aa).

This sequence belongs to the gamma-glutamyl phosphate reductase family.

The protein localises to the cytoplasm. It carries out the reaction L-glutamate 5-semialdehyde + phosphate + NADP(+) = L-glutamyl 5-phosphate + NADPH + H(+). It participates in amino-acid biosynthesis; L-proline biosynthesis; L-glutamate 5-semialdehyde from L-glutamate: step 2/2. Its function is as follows. Catalyzes the NADPH-dependent reduction of L-glutamate 5-phosphate into L-glutamate 5-semialdehyde and phosphate. The product spontaneously undergoes cyclization to form 1-pyrroline-5-carboxylate. This Chlorobium phaeovibrioides (strain DSM 265 / 1930) (Prosthecochloris vibrioformis (strain DSM 265)) protein is Gamma-glutamyl phosphate reductase.